The sequence spans 457 residues: MHISKPAGPLPASVPFYRQLYFQVVVAIVLGALLGHFEPAFAESLKPLGDAFIKLVKMIIAPVIFLTIVTGIAGMTHLKTVGRVFGKAMAYFLFFSTLALVVGLVVAHVVQPGAGMNINPADLDQSAVKSYVEKSHDLTLVGFLMDIIPNSLIGAFTGDQVVNGKLTGPNILQVLFVAVLFGVSLALVGERGKPVLNLLEALIAPVFKLVHILMRAAPIGAFGAIAFTIGKYGVESLVNLAWLVGSFYLTSLLFVLVILGLVSRLCGFSVLKLIRYLKAELLLVLGTSSSESALPSLMEKMEKAGCEKSVVGLVVPTGYSFNLDGTNIYMTLAALFIAQATNTELTLGHQIALLAVAMLSSKGAAGVTGAGFITLAATLAVVPEVPVAGMALILGVDRFMSECRSLTNFIGNAVATVVVSRWENALDRDRLKLVLDGGEPPLLAPVGQPGVAPASLR.

7 helical membrane passes run 20-42 (LYFQ…PAFA), 51-73 (AFIK…TGIA), 88-110 (AMAY…AHVV), 138-158 (LTLV…AFTG), 166-188 (LTGP…LALV), 212-234 (ILMR…KYGV), and 241-263 (AWLV…GLVS).

Belongs to the dicarboxylate/amino acid:cation symporter (DAACS) (TC 2.A.23) family.

The protein resides in the cell inner membrane. Functionally, responsible for the transport of dicarboxylates such as succinate, fumarate, and malate from the periplasm across the membrane. This chain is C4-dicarboxylate transport protein, found in Xanthomonas axonopodis pv. citri (strain 306).